Here is a 71-residue protein sequence, read N- to C-terminus: Small ribosomal subunit protein eS17 (71 aa).

It belongs to the eukaryotic ribosomal protein eS17 family.

The chain is Small ribosomal subunit protein eS17 from Pyrobaculum arsenaticum (strain DSM 13514 / JCM 11321 / PZ6).